We begin with the raw amino-acid sequence, 873 residues long: Leucine--tRNA ligase (873 aa).

The 'HIGH' region signature appears at 47-57 (PYPSGKLHMGH). A 'KMSKS' region motif is present at residues 636–640 (KMSKS). K639 is a binding site for ATP.

The protein belongs to the class-I aminoacyl-tRNA synthetase family.

It is found in the cytoplasm. It catalyses the reaction tRNA(Leu) + L-leucine + ATP = L-leucyl-tRNA(Leu) + AMP + diphosphate. In Acinetobacter baylyi (strain ATCC 33305 / BD413 / ADP1), this protein is Leucine--tRNA ligase.